A 204-amino-acid chain; its full sequence is Tat proofreading chaperone DmsD (204 aa).

Belongs to the TorD/DmsD family. DmsD subfamily.

Functionally, required for biogenesis/assembly of DMSO reductase, but not for the interaction of the DmsA signal peptide with the Tat system. May be part of a chaperone cascade complex that facilitates a folding-maturation pathway for the substrate protein. In Salmonella typhi, this protein is Tat proofreading chaperone DmsD.